A 406-amino-acid chain; its full sequence is Cysteine desulfurase IscS (406 aa).

Pyridoxal 5'-phosphate is bound by residues 75–76, N155, Q183, and 203–205; these read AT and SSH. Position 206 is an N6-(pyridoxal phosphate)lysine (K206). Position 243 (T243) interacts with pyridoxal 5'-phosphate. Catalysis depends on C330, which acts as the Cysteine persulfide intermediate. [2Fe-2S] cluster is bound at residue C330.

This sequence belongs to the class-V pyridoxal-phosphate-dependent aminotransferase family. NifS/IscS subfamily. Homodimer. Forms a heterotetramer with IscU, interacts with other sulfur acceptors. Pyridoxal 5'-phosphate serves as cofactor.

The protein localises to the cytoplasm. The enzyme catalyses (sulfur carrier)-H + L-cysteine = (sulfur carrier)-SH + L-alanine. It functions in the pathway cofactor biosynthesis; iron-sulfur cluster biosynthesis. Its function is as follows. Master enzyme that delivers sulfur to a number of partners involved in Fe-S cluster assembly, tRNA modification or cofactor biosynthesis. Catalyzes the removal of elemental sulfur atoms from cysteine to produce alanine. Functions as a sulfur delivery protein for Fe-S cluster synthesis onto IscU, an Fe-S scaffold assembly protein, as well as other S acceptor proteins. This Haemophilus ducreyi (strain 35000HP / ATCC 700724) protein is Cysteine desulfurase IscS.